Reading from the N-terminus, the 265-residue chain is Capsule polysaccharide export inner-membrane protein CtrC (265 aa).

The next 6 membrane-spanning stretches (helical) occupy residues 37 to 57 (IGFL…VLMW), 64 to 84 (NVSA…MMMW), 121 to 141 (IAGA…IGWI), 147 to 167 (IFYM…LGLV), 178 to 198 (FGKV…VFFF), and 236 to 256 (NPWY…AVVA). The 222-residue stretch at 37–258 (IGFLWLFVEP…LLGLAVVARF (222 aa)) folds into the ABC transmembrane type-2 domain.

It belongs to the ABC-2 integral membrane protein family.

The protein localises to the cell inner membrane. In terms of biological role, may form an ATP-driven capsule polysaccharide export apparatus, in association with the CtrB and CtrD proteins. In Neisseria meningitidis serogroup A / serotype 4A (strain DSM 15465 / Z2491), this protein is Capsule polysaccharide export inner-membrane protein CtrC (ctrC).